Consider the following 430-residue polypeptide: Glutamate-1-semialdehyde 2,1-aminomutase (430 aa).

K265 is subject to N6-(pyridoxal phosphate)lysine.

Belongs to the class-III pyridoxal-phosphate-dependent aminotransferase family. HemL subfamily. As to quaternary structure, homodimer. Requires pyridoxal 5'-phosphate as cofactor.

It localises to the cytoplasm. The enzyme catalyses (S)-4-amino-5-oxopentanoate = 5-aminolevulinate. Its pathway is porphyrin-containing compound metabolism; protoporphyrin-IX biosynthesis; 5-aminolevulinate from L-glutamyl-tRNA(Glu): step 2/2. The protein is Glutamate-1-semialdehyde 2,1-aminomutase of Shewanella sp. (strain ANA-3).